A 694-amino-acid polypeptide reads, in one-letter code: PTS system fructose-specific EIIABC component (694 aa).

The PTS EIIA type-2 domain maps to 4–149 (PLLSAELFFN…NGLINLIDSF (146 aa)). H68 functions as the Tele-phosphohistidine intermediate; for EIIA activity in the catalytic mechanism. H68 is modified (phosphohistidine; by HPr). A PTS EIIB type-2 domain is found at 179–275 (FVAVTACPTG…PQTVYDQVVK (97 aa)). C185 functions as the Phosphocysteine intermediate; for EIIB activity in the catalytic mechanism. C185 is subject to Phosphocysteine; by EIIA. Residues 310 to 687 (IYRAILSGVS…NLLVVRKKTK (378 aa)) form the PTS EIIC type-2 domain. Helical transmembrane passes span 318-338 (VSYM…AFLI), 364-384 (GGLS…FALV), 390-410 (LPGF…IDIV), 422-442 (VSSG…LIIV), 461-481 (ILFI…VINI), 502-522 (LAPL…GGPV), 542-562 (VAMA…AIAA), 576-596 (AAYA…IPFV), 602-622 (IMLA…GAFA), and 655-675 (GVGL…GIII).

Its subcellular location is the cell membrane. The enzyme catalyses D-fructose(out) + N(pros)-phospho-L-histidyl-[protein] = D-fructose 1-phosphate(in) + L-histidyl-[protein]. The phosphoenolpyruvate-dependent sugar phosphotransferase system (sugar PTS), a major carbohydrate active transport system, catalyzes the phosphorylation of incoming sugar substrates concomitantly with their translocation across the cell membrane. This system is involved in fructose transport. The protein is PTS system fructose-specific EIIABC component of Mycoplasma pneumoniae (strain ATCC 29342 / M129 / Subtype 1) (Mycoplasmoides pneumoniae).